The following is a 75-amino-acid chain: Small ribosomal subunit protein bS18 (75 aa).

It belongs to the bacterial ribosomal protein bS18 family. As to quaternary structure, part of the 30S ribosomal subunit. Forms a tight heterodimer with protein bS6.

Binds as a heterodimer with protein bS6 to the central domain of the 16S rRNA, where it helps stabilize the platform of the 30S subunit. The polypeptide is Small ribosomal subunit protein bS18 (Paracoccus denitrificans (strain Pd 1222)).